The following is a 199-amino-acid chain: NAD(P)H dehydrogenase (quinone) (199 aa).

A Flavodoxin-like domain is found at 4-190 (VLVLYYSAYG…AGARYQGKTI (187 aa)). Residues 10-15 (SAYGHI) and 78-80 (TRF) contribute to the FMN site. Residue Tyr-12 participates in NAD(+) binding. Trp-98 provides a ligand contact to substrate. FMN-binding positions include 113 to 119 (STATQHG) and His-134.

It belongs to the WrbA family. It depends on FMN as a cofactor.

It carries out the reaction a quinone + NADH + H(+) = a quinol + NAD(+). The catalysed reaction is a quinone + NADPH + H(+) = a quinol + NADP(+). In Rhodopseudomonas palustris (strain TIE-1), this protein is NAD(P)H dehydrogenase (quinone).